The sequence spans 172 residues: VQ motif-containing protein 17 (172 aa).

Residues 51–60 (FREIVQNLTG) carry the VQ motif. A disordered region spans residues 60–97 (GKQDHHHHDLPHQKGLKRNPRSRRSHDHHEVHDMNKSH). Positions 61 to 71 (KQDHHHHDLPH) are enriched in basic and acidic residues. Over residues 72–85 (QKGLKRNPRSRRSH) the composition is skewed to basic residues. Basic and acidic residues predominate over residues 86–95 (DHHEVHDMNK).

It localises to the nucleus. Functionally, may function as positive regulator of plant growth. The sequence is that of VQ motif-containing protein 17 from Arabidopsis thaliana (Mouse-ear cress).